The primary structure comprises 214 residues: Nascent polypeptide-associated complex subunit alpha (214 aa).

Residues M1 to S80 form a disordered region. Over residues S29 to Q40 the composition is skewed to acidic residues. The segment covering D41–A56 has biased composition (low complexity). An NAC-A/B domain is found at S69–A134. One can recognise a UBA domain in the interval V175–L212.

Belongs to the NAC-alpha family.

Functionally, may promote appropriate targeting of ribosome-nascent polypeptide complexes. This chain is Nascent polypeptide-associated complex subunit alpha (naca), found in Xenopus tropicalis (Western clawed frog).